A 419-amino-acid chain; its full sequence is Pyrophosphate--fructose 6-phosphate 1-phosphotransferase (419 aa).

Diphosphate is bound at residue glycine 13. Substrate is bound by residues 142-144 (TVD), 190-192 (MGR), glutamate 247, and 297-300 (YLQR). The Proton acceptor role is filled by aspartate 144.

The protein belongs to the phosphofructokinase type A (PFKA) family. PPi-dependent PFK group II subfamily. Clade 'B2' sub-subfamily. In terms of assembly, homodimer. It depends on Mg(2+) as a cofactor.

The protein resides in the cytoplasm. The catalysed reaction is beta-D-fructose 6-phosphate + diphosphate = beta-D-fructose 1,6-bisphosphate + phosphate + H(+). Its pathway is carbohydrate degradation; glycolysis; D-glyceraldehyde 3-phosphate and glycerone phosphate from D-glucose: step 3/4. Its activity is regulated as follows. Non-allosteric. Catalyzes the phosphorylation of D-fructose 6-phosphate, the first committing step of glycolysis. Uses inorganic phosphate (PPi) as phosphoryl donor instead of ATP like common ATP-dependent phosphofructokinases (ATP-PFKs), which renders the reaction reversible, and can thus function both in glycolysis and gluconeogenesis. Consistently, PPi-PFK can replace the enzymes of both the forward (ATP-PFK) and reverse (fructose-bisphosphatase (FBPase)) reactions. The protein is Pyrophosphate--fructose 6-phosphate 1-phosphotransferase of Halomonas elongata (strain ATCC 33173 / DSM 2581 / NBRC 15536 / NCIMB 2198 / 1H9).